The chain runs to 247 residues: 1-(5-phosphoribosyl)-5-[(5-phosphoribosylamino)methylideneamino] imidazole-4-carboxamide isomerase (247 aa).

The active-site Proton acceptor is the Asp-8. Asp-131 serves as the catalytic Proton donor.

It belongs to the HisA/HisF family.

Its subcellular location is the cytoplasm. It carries out the reaction 1-(5-phospho-beta-D-ribosyl)-5-[(5-phospho-beta-D-ribosylamino)methylideneamino]imidazole-4-carboxamide = 5-[(5-phospho-1-deoxy-D-ribulos-1-ylimino)methylamino]-1-(5-phospho-beta-D-ribosyl)imidazole-4-carboxamide. It participates in amino-acid biosynthesis; L-histidine biosynthesis; L-histidine from 5-phospho-alpha-D-ribose 1-diphosphate: step 4/9. This Ralstonia pickettii (strain 12J) protein is 1-(5-phosphoribosyl)-5-[(5-phosphoribosylamino)methylideneamino] imidazole-4-carboxamide isomerase.